We begin with the raw amino-acid sequence, 350 residues long: Biotin synthase (350 aa).

Positions 54-278 (REIQLSTLLS…TMPQSYVRLS (225 aa)) constitute a Radical SAM core domain. [4Fe-4S] cluster-binding residues include Cys-69, Cys-73, and Cys-76. Cys-113, Cys-144, Cys-204, and Arg-276 together coordinate [2Fe-2S] cluster.

It belongs to the radical SAM superfamily. Biotin synthase family. As to quaternary structure, homodimer. It depends on [4Fe-4S] cluster as a cofactor. [2Fe-2S] cluster serves as cofactor.

The enzyme catalyses (4R,5S)-dethiobiotin + (sulfur carrier)-SH + 2 reduced [2Fe-2S]-[ferredoxin] + 2 S-adenosyl-L-methionine = (sulfur carrier)-H + biotin + 2 5'-deoxyadenosine + 2 L-methionine + 2 oxidized [2Fe-2S]-[ferredoxin]. Its pathway is cofactor biosynthesis; biotin biosynthesis; biotin from 7,8-diaminononanoate: step 2/2. In terms of biological role, catalyzes the conversion of dethiobiotin (DTB) to biotin by the insertion of a sulfur atom into dethiobiotin via a radical-based mechanism. The sequence is that of Biotin synthase from Neisseria meningitidis serogroup C / serotype 2a (strain ATCC 700532 / DSM 15464 / FAM18).